We begin with the raw amino-acid sequence, 121 residues long: Large ribosomal subunit protein bL12 (121 aa).

This sequence belongs to the bacterial ribosomal protein bL12 family. As to quaternary structure, homodimer. Part of the ribosomal stalk of the 50S ribosomal subunit. Forms a multimeric L10(L12)X complex, where L10 forms an elongated spine to which 2 to 4 L12 dimers bind in a sequential fashion. Binds GTP-bound translation factors.

Its function is as follows. Forms part of the ribosomal stalk which helps the ribosome interact with GTP-bound translation factors. Is thus essential for accurate translation. In Aliivibrio salmonicida (strain LFI1238) (Vibrio salmonicida (strain LFI1238)), this protein is Large ribosomal subunit protein bL12.